The chain runs to 406 residues: Cytochrome bc1 complex Rieske iron-sulfur subunit (406 aa).

A run of 3 helical transmembrane segments spans residues 56–76, 98–118, and 166–186; these read VGIWFGIGIVSALAFLAVYLF, LLGLTSGLAILSLGIGVIFYI, and MLGIGGVLAGLTIIAPLGGMV. The 98-residue stretch at 291–388 folds into the Rieske domain; that stretch reads HGPRNAVMLI…ITVDEEGYLV (98 aa). Residues cysteine 331, histidine 333, cysteine 350, and histidine 353 each coordinate [2Fe-2S] cluster. Cysteine 336 and cysteine 352 form a disulfide bridge.

This sequence belongs to the Rieske iron-sulfur protein family. In terms of assembly, the cytochrome bc1 complex is composed of a cytochrome b (QcrB), the Rieske iron-sulfur protein (QcrA) and a diheme cytochrome c (QcrC) subunit. The bc1 complex forms a supercomplex with cytochrome c oxidase (cytochrome aa3). Requires [2Fe-2S] cluster as cofactor.

It is found in the cell membrane. Functionally, iron-sulfur subunit of the cytochrome bc1 complex, an essential component of the respiratory electron transport chain required for ATP synthesis. The bc1 complex catalyzes the oxidation of menaquinol and the reduction of cytochrome c in the respiratory chain. The bc1 complex operates through a Q-cycle mechanism that couples electron transfer to generation of the proton gradient that drives ATP synthesis. The sequence is that of Cytochrome bc1 complex Rieske iron-sulfur subunit (qcrA) from Corynebacterium diphtheriae (strain ATCC 700971 / NCTC 13129 / Biotype gravis).